Consider the following 356-residue polypeptide: Dual-specificity RNA methyltransferase RlmN (356 aa).

E95 functions as the Proton acceptor in the catalytic mechanism. Residues 101–332 (EDERGTLCIS…VTVIRDRRGE (232 aa)) enclose the Radical SAM core domain. C108 and C338 are joined by a disulfide. C115, C119, and C122 together coordinate [4Fe-4S] cluster. S-adenosyl-L-methionine contacts are provided by residues 165–166 (GE), S197, 219–221 (SLH), and N295. C338 acts as the S-methylcysteine intermediate in catalysis.

It belongs to the radical SAM superfamily. RlmN family. [4Fe-4S] cluster serves as cofactor.

It localises to the cytoplasm. It catalyses the reaction adenosine(2503) in 23S rRNA + 2 reduced [2Fe-2S]-[ferredoxin] + 2 S-adenosyl-L-methionine = 2-methyladenosine(2503) in 23S rRNA + 5'-deoxyadenosine + L-methionine + 2 oxidized [2Fe-2S]-[ferredoxin] + S-adenosyl-L-homocysteine. It carries out the reaction adenosine(37) in tRNA + 2 reduced [2Fe-2S]-[ferredoxin] + 2 S-adenosyl-L-methionine = 2-methyladenosine(37) in tRNA + 5'-deoxyadenosine + L-methionine + 2 oxidized [2Fe-2S]-[ferredoxin] + S-adenosyl-L-homocysteine. Functionally, specifically methylates position 2 of adenine 2503 in 23S rRNA and position 2 of adenine 37 in tRNAs. m2A2503 modification seems to play a crucial role in the proofreading step occurring at the peptidyl transferase center and thus would serve to optimize ribosomal fidelity. The chain is Dual-specificity RNA methyltransferase RlmN from Magnetococcus marinus (strain ATCC BAA-1437 / JCM 17883 / MC-1).